The primary structure comprises 239 residues: Uridylate kinase (239 aa).

An ATP-binding site is contributed by 10–13 (KISG). An involved in allosteric activation by GTP region spans residues 18-23 (GEAGFG). G52 is a UMP binding site. ATP contacts are provided by G53 and R57. Residues D72 and 133–140 (TGNPYFST) each bind UMP. ATP contacts are provided by N161, Y167, and D170.

The protein belongs to the UMP kinase family. As to quaternary structure, homohexamer.

The protein localises to the cytoplasm. It catalyses the reaction UMP + ATP = UDP + ADP. It functions in the pathway pyrimidine metabolism; CTP biosynthesis via de novo pathway; UDP from UMP (UMPK route): step 1/1. With respect to regulation, allosterically activated by GTP. Inhibited by UTP. Functionally, catalyzes the reversible phosphorylation of UMP to UDP. This chain is Uridylate kinase, found in Lacticaseibacillus paracasei (strain ATCC 334 / BCRC 17002 / CCUG 31169 / CIP 107868 / KCTC 3260 / NRRL B-441) (Lactobacillus paracasei).